The following is a 105-amino-acid chain: Small ribosomal subunit protein uS17 (105 aa).

This sequence belongs to the universal ribosomal protein uS17 family. As to quaternary structure, part of the 30S ribosomal subunit.

Its function is as follows. One of the primary rRNA binding proteins, it binds specifically to the 5'-end of 16S ribosomal RNA. This is Small ribosomal subunit protein uS17 from Thermus aquaticus.